Reading from the N-terminus, the 60-residue chain is Large ribosomal subunit protein uL30 (60 aa).

The protein belongs to the universal ribosomal protein uL30 family. As to quaternary structure, part of the 50S ribosomal subunit.

The protein is Large ribosomal subunit protein uL30 of Acidovorax ebreus (strain TPSY) (Diaphorobacter sp. (strain TPSY)).